Here is a 413-residue protein sequence, read N- to C-terminus: Multifunctional CCA protein (413 aa).

The ATP site is built by glycine 8 and arginine 11. The CTP site is built by glycine 8 and arginine 11. Positions 21 and 23 each coordinate Mg(2+). Residues arginine 91, arginine 137, and arginine 140 each coordinate ATP. Residues arginine 91, arginine 137, and arginine 140 each coordinate CTP. The HD domain occupies 228 to 329 (TGIHTLMVLA…LKVFDKADAW (102 aa)).

Belongs to the tRNA nucleotidyltransferase/poly(A) polymerase family. Bacterial CCA-adding enzyme type 1 subfamily. In terms of assembly, monomer. Can also form homodimers and oligomers. Mg(2+) serves as cofactor. Requires Ni(2+) as cofactor.

It catalyses the reaction a tRNA precursor + 2 CTP + ATP = a tRNA with a 3' CCA end + 3 diphosphate. The catalysed reaction is a tRNA with a 3' CCA end + 2 CTP + ATP = a tRNA with a 3' CCACCA end + 3 diphosphate. Functionally, catalyzes the addition and repair of the essential 3'-terminal CCA sequence in tRNAs without using a nucleic acid template. Adds these three nucleotides in the order of C, C, and A to the tRNA nucleotide-73, using CTP and ATP as substrates and producing inorganic pyrophosphate. tRNA 3'-terminal CCA addition is required both for tRNA processing and repair. Also involved in tRNA surveillance by mediating tandem CCA addition to generate a CCACCA at the 3' terminus of unstable tRNAs. While stable tRNAs receive only 3'-terminal CCA, unstable tRNAs are marked with CCACCA and rapidly degraded. The protein is Multifunctional CCA protein of Aeromonas salmonicida (strain A449).